We begin with the raw amino-acid sequence, 384 residues long: GDSL esterase/lipase ENOD8 (384 aa).

A signal peptide spans 1–31; sequence MKFMAKIELSRHIPLVTLIVLVLCITPPIFA. Ser-46 acts as the Nucleophile in catalysis. Residues Asn-105, Asn-191, Asn-198, Asn-276, and Asn-330 are each glycosylated (N-linked (GlcNAc...) asparagine). Residues Asp-349 and His-352 contribute to the active site.

It belongs to the 'GDSL' lipolytic enzyme family. Expressed in root nodules (at protein level).

The protein resides in the symbiosome. Its function is as follows. Has lipase and esterase activities. Probably involved in root nodule physiology. This chain is GDSL esterase/lipase ENOD8, found in Medicago truncatula (Barrel medic).